A 193-amino-acid chain; its full sequence is Interferon epsilon (193 aa).

Residues 1–21 (MINKSFFEIMLVLLASSTGFS) form the signal peptide. A disulfide bridge links C53 with C163. The N-linked (GlcNAc...) asparagine glycan is linked to N139.

It belongs to the alpha/beta interferon family.

Its subcellular location is the secreted. Its function is as follows. Type I interferon required for maintaining basal levels of IFN-regulated genes, including 2'-5'-oligoadenylate synthetase, IRF7 and ISG15, in the female reproductive tract. Directly mediates protection against viral and bacterial genital infections. The chain is Interferon epsilon (IFNE) from Sus scrofa (Pig).